The following is a 696-amino-acid chain: DNA-directed RNA polymerase subunit beta' (696 aa).

The Zn(2+) site is built by Cys69, Cys71, Cys87, and Cys90. Asp504, Asp506, and Asp508 together coordinate Mg(2+).

This sequence belongs to the RNA polymerase beta' chain family. RpoC1 subfamily. In terms of assembly, in plastids the minimal PEP RNA polymerase catalytic core is composed of four subunits: alpha, beta, beta', and beta''. When a (nuclear-encoded) sigma factor is associated with the core the holoenzyme is formed, which can initiate transcription. Requires Mg(2+) as cofactor. The cofactor is Zn(2+).

The protein localises to the plastid. It localises to the chloroplast. The enzyme catalyses RNA(n) + a ribonucleoside 5'-triphosphate = RNA(n+1) + diphosphate. DNA-dependent RNA polymerase catalyzes the transcription of DNA into RNA using the four ribonucleoside triphosphates as substrates. The protein is DNA-directed RNA polymerase subunit beta' of Pinus koraiensis (Korean pine).